Consider the following 292-residue polypeptide: Ribosomal protein L11 methyltransferase (292 aa).

Residues Thr-143, Gly-164, Asp-186, and Asn-228 each coordinate S-adenosyl-L-methionine.

This sequence belongs to the methyltransferase superfamily. PrmA family.

The protein resides in the cytoplasm. The enzyme catalyses L-lysyl-[protein] + 3 S-adenosyl-L-methionine = N(6),N(6),N(6)-trimethyl-L-lysyl-[protein] + 3 S-adenosyl-L-homocysteine + 3 H(+). In terms of biological role, methylates ribosomal protein L11. In Aeromonas hydrophila subsp. hydrophila (strain ATCC 7966 / DSM 30187 / BCRC 13018 / CCUG 14551 / JCM 1027 / KCTC 2358 / NCIMB 9240 / NCTC 8049), this protein is Ribosomal protein L11 methyltransferase.